The primary structure comprises 305 residues: uncharacterized protein (305 aa).

The tract at residues 53 to 185 is disordered; the sequence is SGRIGDGDDG…TGPRSSRTVG (133 aa). Basic and acidic residues-rich tracts occupy residues 95–116 and 128–142; these read VEER…ERPT and GSER…RSEG. The span at 161–171 shows a compositional bias: polar residues; sequence GNTQAPSQSAE. The RING-type; atypical zinc finger occupies 260–302; that stretch reads CAICMSNFIKNQRLRVLPCDHRFHVGCVDKWLLGHSNKCPVCR.

This is an uncharacterized protein from Encephalitozoon cuniculi (strain GB-M1) (Microsporidian parasite).